Reading from the N-terminus, the 912-residue chain is Protein translocase subunit SecA (912 aa).

ATP contacts are provided by residues Q87, 105–109 (GEGKT), and D510. The tract at residues 854 to 912 (KLRHEQASAAQAEGEGDDGQQGQQATPETFVRQERKVGRNEPCPCGSGKKYKQCCGKVS) is disordered. Zn(2+) contacts are provided by C896, C898, C907, and C908.

Belongs to the SecA family. As to quaternary structure, monomer and homodimer. Part of the essential Sec protein translocation apparatus which comprises SecA, SecYEG and auxiliary proteins SecDF-YajC and YidC. Zn(2+) serves as cofactor.

It is found in the cell inner membrane. Its subcellular location is the cytoplasm. The catalysed reaction is ATP + H2O + cellular proteinSide 1 = ADP + phosphate + cellular proteinSide 2.. Part of the Sec protein translocase complex. Interacts with the SecYEG preprotein conducting channel. Has a central role in coupling the hydrolysis of ATP to the transfer of proteins into and across the cell membrane, serving both as a receptor for the preprotein-SecB complex and as an ATP-driven molecular motor driving the stepwise translocation of polypeptide chains across the membrane. This Marinobacter nauticus (strain ATCC 700491 / DSM 11845 / VT8) (Marinobacter aquaeolei) protein is Protein translocase subunit SecA.